Consider the following 356-residue polypeptide: ATP-dependent 6-phosphofructokinase (356 aa).

ATP-binding positions include glycine 15, 78–79 (KG), and 115–118 (GEGT). Glutamate 116 contacts Mg(2+). Substrate-binding positions include 138-140 (TID), arginine 175, 182-184 (MGR), glutamate 235, arginine 272, and 278-281 (HLQR). Aspartate 140 functions as the Proton acceptor in the catalytic mechanism.

It belongs to the phosphofructokinase type A (PFKA) family. Mixed-substrate PFK group III subfamily. Homodimer or homotetramer. Mg(2+) is required as a cofactor.

The protein resides in the cytoplasm. It catalyses the reaction beta-D-fructose 6-phosphate + ATP = beta-D-fructose 1,6-bisphosphate + ADP + H(+). Its pathway is carbohydrate degradation; glycolysis; D-glyceraldehyde 3-phosphate and glycerone phosphate from D-glucose: step 3/4. Its function is as follows. Catalyzes the phosphorylation of D-fructose 6-phosphate to fructose 1,6-bisphosphate by ATP, the first committing step of glycolysis. In Chloroflexus aggregans (strain MD-66 / DSM 9485), this protein is ATP-dependent 6-phosphofructokinase.